Reading from the N-terminus, the 104-residue chain is Thioredoxin (104 aa).

The Thioredoxin domain maps to 2 to 104; the sequence is KQVSDASFEE…KLFEWVEASV (103 aa). Cys29 and Cys32 form a disulfide bridge.

Belongs to the thioredoxin family.

Participates in various redox reactions through the reversible oxidation of its active center dithiol to a disulfide and catalyzes dithiol-disulfide exchange reactions. The sequence is that of Thioredoxin (trxA) from Rhodospirillum rubrum.